The chain runs to 119 residues: Large ribosomal subunit protein bL20c (119 aa).

Belongs to the bacterial ribosomal protein bL20 family.

It localises to the plastid. The protein resides in the chloroplast. Functionally, binds directly to 23S ribosomal RNA and is necessary for the in vitro assembly process of the 50S ribosomal subunit. It is not involved in the protein synthesizing functions of that subunit. The sequence is that of Large ribosomal subunit protein bL20c from Lolium perenne (Perennial ryegrass).